A 1464-amino-acid polypeptide reads, in one-letter code: Collagen alpha-1(III) chain (1464 aa).

The N-terminal stretch at M1–A23 is a signal peptide. Residues Q24 to P154 constitute a propeptide, N-terminal propeptide. Positions L31–P90 constitute a VWFC domain. Residues P97–C1195 are disordered. Residues P100 to K109 show a composition bias toward low complexity. Residues T147–F156 show a composition bias toward polar residues. The tract at residues Q155–G169 is nonhelical region (N-terminal). Residues G164–G173 show a composition bias toward gly residues. Residues G170–C1195 are triple-helical region. Residues P174 to P184 show a composition bias toward pro residues. The span at S186 to Y198 shows a compositional bias: low complexity. The segment covering K228 to E240 has biased composition (basic and acidic residues). K262 carries the post-translational modification 5-hydroxylysine; alternate. A glycan (O-linked (Gal...) hydroxylysine; alternate) is linked at K262. Over residues R265 to E276 the composition is skewed to basic and acidic residues. Position 283 is a 5-hydroxylysine (K283). Low complexity-rich tracts occupy residues P310 to N321 and P354 to Q379. Over residues G389–G398 the composition is skewed to gly residues. Low complexity predominate over residues P399–R412. The segment covering G527–G548 has biased composition (gly residues). A compositionally biased stretch (low complexity) spans P606–P615. Gly residues-rich tracts occupy residues G641 to G650 and G668 to G677. Residues A678 to P691 show a composition bias toward low complexity. Residues G692–P708 are compositionally biased toward gly residues. The segment covering A717–P727 has biased composition (low complexity). Residues A822–E834 are compositionally biased toward basic and acidic residues. K859 is modified (5-hydroxylysine). Over residues G863–L879 the composition is skewed to gly residues. The span at P889–P906 shows a compositional bias: pro residues. Low complexity-rich tracts occupy residues A907 to P934 and P945 to P960. Residue K976 is modified to 5-hydroxylysine. Residues P1045–V1054 show a composition bias toward pro residues. The segment covering P1068–P1084 has biased composition (low complexity). 2 positions are modified to 5-hydroxylysine: K1093 and K1105. Over residues P1120 to P1132 the composition is skewed to low complexity. Pro residues predominate over residues P1180–P1192. The propeptide at D1220 to L1464 is C-terminal propeptide. The Fibrillar collagen NC1 domain maps to E1230–L1464. 3 disulfides stabilise this stretch: C1260-C1292, C1300-C1462, and C1370-C1415. Ca(2+) is bound by residues D1278, N1280, Q1281, C1283, and D1286.

Belongs to the fibrillar collagen family. In terms of assembly, trimers of identical alpha 1(III) chains. The chains are linked to each other by interchain disulfide bonds. Trimers are also cross-linked via hydroxylysines. Interacts with ADGRG1. Proline residues at the third position of the tripeptide repeating unit (G-X-Y) are hydroxylated in some or all of the chains. In terms of processing, O-linked glycan consists of a Glc-Gal disaccharide bound to the oxygen atom of a post-translationally added hydroxyl group. Expressed in embryonic brain, specifically in the meninges, pial basement membrane and blood vessels (at protein level).

The protein resides in the secreted. It is found in the extracellular space. The protein localises to the extracellular matrix. Collagen type III occurs in most soft connective tissues along with type I collagen. Involved in regulation of cortical development. Is the major ligand of ADGRG1 in the developing brain and binding to ADGRG1 inhibits neuronal migration and activates the RhoA pathway by coupling ADGRG1 to GNA13 and possibly GNA12. This chain is Collagen alpha-1(III) chain (Col3a1), found in Mus musculus (Mouse).